The chain runs to 600 residues: Baculoviral IAP repeat-containing protein 3 (600 aa).

The stretch at 27–94 (ELYRLSTYSA…RKLYPSCNFV (68 aa)) is one BIR 1 repeat. At Ser138 the chain carries Phosphoserine. BIR repeat units follow at residues 167–233 (EKAR…CPFL) and 253–320 (HAAR…CEYL). Zn(2+) is bound by residues Cys290, Cys293, His310, and Cys317. Residues 436 to 525 (EESDDLALIR…ALYRDIFVQQ (90 aa)) enclose the CARD domain. The RING-type zinc finger occupies 553-588 (CKVCMDREVSIVFIPCGHLVVCKDCAPSLRKCPICR).

Belongs to the IAP family. As to quaternary structure, interacts with PRSS25; the interaction inhibits apoptotic suppressor activity. The BIR motifs region interacts with TNF receptor associated factors 1 and 2 (TRAF1 and TRAF2) to form a heteromeric complex, which is then recruited to the tumor necrosis factor receptor 2 (TNFR2). Interaction with TRAF2 is required for ubiquitination of IKBKE, degradation of NFKBIA and activation of NF-kappa-B. Interacts with RIP1, RIP2, RIP3, RIP4 and USP19. In terms of processing, auto-ubiquitinated and degraded by the proteasome in apoptotic cells.

The protein resides in the cytoplasm. The protein localises to the nucleus. It carries out the reaction S-ubiquitinyl-[E2 ubiquitin-conjugating enzyme]-L-cysteine + [acceptor protein]-L-lysine = [E2 ubiquitin-conjugating enzyme]-L-cysteine + N(6)-ubiquitinyl-[acceptor protein]-L-lysine.. With respect to regulation, USP19 regulates the stability of BIRC3/c-IAP2 by preventing its ubiquitination. Its function is as follows. Multi-functional protein which regulates not only caspases and apoptosis, but also modulates inflammatory signaling and immunity, mitogenic kinase signaling and cell proliferation, as well as cell invasion and metastasis. Acts as an E3 ubiquitin-protein ligase regulating NF-kappa-B signaling and regulates both canonical and non-canonical NF-kappa-B signaling by acting in opposite directions: acts as a positive regulator of the canonical pathway and suppresses constitutive activation of non-canonical NF-kappa-B signaling. The target proteins for its E3 ubiquitin-protein ligase activity include: RIPK1, RIPK2, RIPK3, RIPK4, CASP3, CASP7, CASP8, IKBKE, TRAF1, and BCL10. Acts as an important regulator of innate immune signaling via regulation of Toll-like receptors (TLRs), Nodlike receptors (NLRs) and RIG-I like receptors (RLRs), collectively referred to as pattern recognition receptors (PRRs). Protects cells from spontaneous formation of the ripoptosome, a large multi-protein complex that has the capability to kill cancer cells in a caspase-dependent and caspase-independent manner. Suppresses ripoptosome formation by ubiquitinating RIPK1 and CASP8. This is Baculoviral IAP repeat-containing protein 3 (Birc3) from Mus musculus (Mouse).